Here is a 165-residue protein sequence, read N- to C-terminus: NADH-quinone oxidoreductase subunit I (165 aa).

4Fe-4S ferredoxin-type domains are found at residues 57–86 (RRYE…IESE) and 96–125 (TRYD…ETHI). Residues Cys66, Cys69, Cys72, Cys76, Cys105, Cys108, Cys111, and Cys115 each coordinate [4Fe-4S] cluster.

This sequence belongs to the complex I 23 kDa subunit family. As to quaternary structure, NDH-1 is composed of 14 different subunits. Subunits NuoA, H, J, K, L, M, N constitute the membrane sector of the complex. The cofactor is [4Fe-4S] cluster.

It is found in the cell inner membrane. The catalysed reaction is a quinone + NADH + 5 H(+)(in) = a quinol + NAD(+) + 4 H(+)(out). Functionally, NDH-1 shuttles electrons from NADH, via FMN and iron-sulfur (Fe-S) centers, to quinones in the respiratory chain. The immediate electron acceptor for the enzyme in this species is believed to be ubiquinone. Couples the redox reaction to proton translocation (for every two electrons transferred, four hydrogen ions are translocated across the cytoplasmic membrane), and thus conserves the redox energy in a proton gradient. This chain is NADH-quinone oxidoreductase subunit I, found in Methylibium petroleiphilum (strain ATCC BAA-1232 / LMG 22953 / PM1).